The following is a 454-amino-acid chain: Bifunctional protein GlmU (454 aa).

Residues 1–226 are pyrophosphorylase; the sequence is MALNVVILAA…AIEVEGANNR (226 aa). UDP-N-acetyl-alpha-D-glucosamine-binding positions include 8-11, lysine 22, glutamine 73, 78-79, 100-102, glycine 137, glutamate 151, asparagine 166, and asparagine 224; these read LAAG, GT, and YGD. A Mg(2+)-binding site is contributed by aspartate 102. Asparagine 224 serves as a coordination point for Mg(2+). The interval 227–247 is linker; it reads VQLAQLERAYQAREAEKLMIA. Residues 248-454 are N-acetyltransferase; that stretch reads GANLRDPSRI…GWQRPVKIKK (207 aa). UDP-N-acetyl-alpha-D-glucosamine-binding residues include arginine 330 and lysine 348. Histidine 360 acts as the Proton acceptor in catalysis. The UDP-N-acetyl-alpha-D-glucosamine site is built by tyrosine 363 and asparagine 374. Acetyl-CoA-binding positions include alanine 377, 383 to 384, serine 402, alanine 420, and arginine 437; that span reads NY.

The protein in the N-terminal section; belongs to the N-acetylglucosamine-1-phosphate uridyltransferase family. It in the C-terminal section; belongs to the transferase hexapeptide repeat family. As to quaternary structure, homotrimer. It depends on Mg(2+) as a cofactor.

Its subcellular location is the cytoplasm. It catalyses the reaction alpha-D-glucosamine 1-phosphate + acetyl-CoA = N-acetyl-alpha-D-glucosamine 1-phosphate + CoA + H(+). The enzyme catalyses N-acetyl-alpha-D-glucosamine 1-phosphate + UTP + H(+) = UDP-N-acetyl-alpha-D-glucosamine + diphosphate. It functions in the pathway nucleotide-sugar biosynthesis; UDP-N-acetyl-alpha-D-glucosamine biosynthesis; N-acetyl-alpha-D-glucosamine 1-phosphate from alpha-D-glucosamine 6-phosphate (route II): step 2/2. It participates in nucleotide-sugar biosynthesis; UDP-N-acetyl-alpha-D-glucosamine biosynthesis; UDP-N-acetyl-alpha-D-glucosamine from N-acetyl-alpha-D-glucosamine 1-phosphate: step 1/1. The protein operates within bacterial outer membrane biogenesis; LPS lipid A biosynthesis. Functionally, catalyzes the last two sequential reactions in the de novo biosynthetic pathway for UDP-N-acetylglucosamine (UDP-GlcNAc). The C-terminal domain catalyzes the transfer of acetyl group from acetyl coenzyme A to glucosamine-1-phosphate (GlcN-1-P) to produce N-acetylglucosamine-1-phosphate (GlcNAc-1-P), which is converted into UDP-GlcNAc by the transfer of uridine 5-monophosphate (from uridine 5-triphosphate), a reaction catalyzed by the N-terminal domain. This Shewanella sp. (strain MR-4) protein is Bifunctional protein GlmU.